A 143-amino-acid polypeptide reads, in one-letter code: Large ribosomal subunit protein uL11 (143 aa).

Belongs to the universal ribosomal protein uL11 family. In terms of assembly, part of the ribosomal stalk of the 50S ribosomal subunit. Interacts with L10 and the large rRNA to form the base of the stalk. L10 forms an elongated spine to which L12 dimers bind in a sequential fashion forming a multimeric L10(L12)X complex. In terms of processing, one or more lysine residues are methylated.

In terms of biological role, forms part of the ribosomal stalk which helps the ribosome interact with GTP-bound translation factors. The protein is Large ribosomal subunit protein uL11 of Paraburkholderia xenovorans (strain LB400).